A 243-amino-acid chain; its full sequence is Homeobox protein goosecoid isoform A (243 aa).

Residues 148-207 constitute a DNA-binding region (homeobox); it reads KRRHRTIFTDEQLEALENLFQETKYPDVGTREQLARRVHLREEKVEVWFKNRRAKWRRQK. Residues 201–243 are disordered; the sequence is AKWRRQKRSSSEESENAQKWNKSSKNSAEKADEQVKSDLDSDS. The segment covering 217 to 226 has biased composition (polar residues); it reads AQKWNKSSKN. Over residues 227–243 the composition is skewed to basic and acidic residues; the sequence is SAEKADEQVKSDLDSDS.

This sequence belongs to the paired homeobox family. Bicoid subfamily. At the start of gastrulation, it is found in a patch of cells encompassing 60 degrees of arc on the dorsal marginal zone.

It is found in the nucleus. Functionally, plays a central role in executing Spemann's organizer phenomenon (the dorsal blastopore lip of the early Xenopus laevis gastrula can organize a complete secondary body axis when transplanted to another embryo). The polypeptide is Homeobox protein goosecoid isoform A (gsc-a) (Xenopus laevis (African clawed frog)).